We begin with the raw amino-acid sequence, 184 residues long: ATP synthase subunit b, chloroplastic (184 aa).

The helical transmembrane segment at 27–49 (LATNPINLSVVLGVLIFFGKGVL) threads the bilayer.

This sequence belongs to the ATPase B chain family. As to quaternary structure, F-type ATPases have 2 components, F(1) - the catalytic core - and F(0) - the membrane proton channel. F(1) has five subunits: alpha(3), beta(3), gamma(1), delta(1), epsilon(1). F(0) has four main subunits: a(1), b(1), b'(1) and c(10-14). The alpha and beta chains form an alternating ring which encloses part of the gamma chain. F(1) is attached to F(0) by a central stalk formed by the gamma and epsilon chains, while a peripheral stalk is formed by the delta, b and b' chains.

It is found in the plastid. Its subcellular location is the chloroplast thylakoid membrane. In terms of biological role, f(1)F(0) ATP synthase produces ATP from ADP in the presence of a proton or sodium gradient. F-type ATPases consist of two structural domains, F(1) containing the extramembraneous catalytic core and F(0) containing the membrane proton channel, linked together by a central stalk and a peripheral stalk. During catalysis, ATP synthesis in the catalytic domain of F(1) is coupled via a rotary mechanism of the central stalk subunits to proton translocation. Its function is as follows. Component of the F(0) channel, it forms part of the peripheral stalk, linking F(1) to F(0). This chain is ATP synthase subunit b, chloroplastic, found in Platanus occidentalis (Sycamore).